A 166-amino-acid chain; its full sequence is Large ribosomal subunit protein uL10 (166 aa).

It belongs to the universal ribosomal protein uL10 family. Part of the ribosomal stalk of the 50S ribosomal subunit. The N-terminus interacts with L11 and the large rRNA to form the base of the stalk. The C-terminus forms an elongated spine to which L12 dimers bind in a sequential fashion forming a multimeric L10(L12)X complex.

Its function is as follows. Forms part of the ribosomal stalk, playing a central role in the interaction of the ribosome with GTP-bound translation factors. The sequence is that of Large ribosomal subunit protein uL10 from Staphylococcus haemolyticus (strain JCSC1435).